We begin with the raw amino-acid sequence, 300 residues long: MKQYLITGGTGMVGSQLVNEIKKSDSHITILTRHDQISNDKKISYVNWAKSGWEHKVPQNIDVVINLAGATLNKRWTPEYKQTLMLSRIQSTQALYELFKSRNKAPKALFNASATGYYPPDLFMSYTEVYKTLPFDFLSDIVYQWERFAQQFEQLGTRVVIGRFGIILSNEGGALQTMKLPYEYYIGGKLGSGQQWYSWIHINDLIQAILFLINNESASGPFNLTAPIPERQNLFGYTLARAMHKPHETWAPSLAMRLILGQMSTVVLDTQKVLPNKIQALGFQFKYSNLKMALEDLIKE.

This sequence belongs to the NAD(P)-dependent epimerase/dehydratase family. SDR39U1 subfamily.

The sequence is that of Epimerase family protein SACOL0834 from Staphylococcus aureus (strain COL).